We begin with the raw amino-acid sequence, 667 residues long: DNA ligase (667 aa).

Residues 32–36 (DSEYD), 81–82 (SL), and E110 contribute to the NAD(+) site. Residue K112 is the N6-AMP-lysine intermediate of the active site. NAD(+) is bound by residues R133, E167, K283, and K307. The Zn(2+) site is built by C401, C404, C419, and C424. Residues 586–667 (EGHPEFSGKT…FVDKQNELNS (82 aa)) form the BRCT domain.

Belongs to the NAD-dependent DNA ligase family. LigA subfamily. Mg(2+) serves as cofactor. It depends on Mn(2+) as a cofactor.

It carries out the reaction NAD(+) + (deoxyribonucleotide)n-3'-hydroxyl + 5'-phospho-(deoxyribonucleotide)m = (deoxyribonucleotide)n+m + AMP + beta-nicotinamide D-nucleotide.. DNA ligase that catalyzes the formation of phosphodiester linkages between 5'-phosphoryl and 3'-hydroxyl groups in double-stranded DNA using NAD as a coenzyme and as the energy source for the reaction. It is essential for DNA replication and repair of damaged DNA. This chain is DNA ligase, found in Staphylococcus aureus (strain MRSA252).